A 364-amino-acid chain; its full sequence is MTNTAARRSTGEAQLLPLPSIYSLTLDELKEWLVAHGEKPFRATQIYEWLYGKRVTDFAEMTNLPKRLREQLASAFSITTLKTIVKQTSKDGTIKFLFELHDGYSIETVLMRHNYGNSVCVTTQVGCRIGCTFCASTLGGLKRHLEAGEIVAQVVQVQKALDETEERVSSIVVMGIGEPFDNYDALIKFLRIVNHSKGLNIGARHITVSTSGIIPKIYQFADEGMQINFAISLHAPTTELRTKLMPINKAYPLPKLMEAVRYYIEKTGRRVTFEYGLFGGVNDQLEHAEQLAELLKGLKCHVNLIPVNYVPERNYVRTPRNQIFAFERALKKHGINVTIRREHGHDIDAACGQLRAKERKEETR.

The active-site Proton acceptor is the E107. The Radical SAM core domain maps to 113–346 (HNYGNSVCVT…VTIRREHGHD (234 aa)). An intrachain disulfide couples C120 to C351. Positions 127, 131, and 134 each coordinate [4Fe-4S] cluster. Residues 177–178 (GE), S209, 232–234 (SLH), and N308 contribute to the S-adenosyl-L-methionine site. The active-site S-methylcysteine intermediate is C351.

The protein belongs to the radical SAM superfamily. RlmN family. The cofactor is [4Fe-4S] cluster.

It localises to the cytoplasm. The catalysed reaction is adenosine(2503) in 23S rRNA + 2 reduced [2Fe-2S]-[ferredoxin] + 2 S-adenosyl-L-methionine = 2-methyladenosine(2503) in 23S rRNA + 5'-deoxyadenosine + L-methionine + 2 oxidized [2Fe-2S]-[ferredoxin] + S-adenosyl-L-homocysteine. It catalyses the reaction adenosine(37) in tRNA + 2 reduced [2Fe-2S]-[ferredoxin] + 2 S-adenosyl-L-methionine = 2-methyladenosine(37) in tRNA + 5'-deoxyadenosine + L-methionine + 2 oxidized [2Fe-2S]-[ferredoxin] + S-adenosyl-L-homocysteine. Its function is as follows. Specifically methylates position 2 of adenine 2503 in 23S rRNA and position 2 of adenine 37 in tRNAs. The protein is Probable dual-specificity RNA methyltransferase RlmN of Geobacillus thermodenitrificans (strain NG80-2).